The chain runs to 458 residues: Secretion-regulating guanine nucleotide exchange factor (458 aa).

7 RCC1 repeats span residues 15 to 67, 68 to 119, 120 to 171, 172 to 230, 231 to 283, 284 to 351, and 352 to 402; these read AALF…VTDG, GDLF…LTEN, GQVL…ATAS, GIVF…LTDA, GEVY…QTET, GKMF…IIGG, and VCYS…LCQL. Residues 420 to 458 form a disordered region; it reads DAIEDTESQKAMDKERNWKERQSETSTQSQSDWSRNGGL. Residues 426 to 442 are compositionally biased toward basic and acidic residues; the sequence is ESQKAMDKERNWKERQS. At Ser-427 the chain carries Phosphoserine.

In terms of assembly, interacts with SEC5. The interaction occurs only in the presence of magnesium or manganese and is stimulated by dCTP or GTP.

The protein localises to the cytoplasm. The protein resides in the nucleus. Its function is as follows. Probable guanine nucleotide exchange factor (GEF), which may be involved in the secretion process. This chain is Secretion-regulating guanine nucleotide exchange factor (SERGEF), found in Homo sapiens (Human).